A 328-amino-acid polypeptide reads, in one-letter code: Carbonic anhydrase, chloroplastic (328 aa).

A compositionally biased stretch (low complexity) spans 1 to 15 (MSTSSINGFSLSSLS). A disordered region spans residues 1–26 (MSTSSINGFSLSSLSPAKTSTKRTTL). Residues 1–70 (MSTSSINGFS…IITPVLREEM (70 aa)) constitute a chloroplast transit peptide.

This sequence belongs to the beta-class carbonic anhydrase family. In terms of assembly, homohexamer.

The protein resides in the plastid. It localises to the chloroplast stroma. The catalysed reaction is hydrogencarbonate + H(+) = CO2 + H2O. Its function is as follows. Reversible hydration of carbon dioxide. This Pisum sativum (Garden pea) protein is Carbonic anhydrase, chloroplastic.